The chain runs to 247 residues: 2,3-bisphosphoglycerate-dependent phosphoglycerate mutase (247 aa).

Substrate contacts are provided by residues Arg-8 to Asn-15, Thr-21 to Gly-22, Arg-60, Glu-87 to Tyr-90, Lys-98, Arg-114 to Arg-115, and Gly-183 to Asn-184. Residue His-9 is the Tele-phosphohistidine intermediate of the active site. The active-site Proton donor/acceptor is Glu-87.

It belongs to the phosphoglycerate mutase family. BPG-dependent PGAM subfamily.

It catalyses the reaction (2R)-2-phosphoglycerate = (2R)-3-phosphoglycerate. It participates in carbohydrate degradation; glycolysis; pyruvate from D-glyceraldehyde 3-phosphate: step 3/5. Functionally, catalyzes the interconversion of 2-phosphoglycerate and 3-phosphoglycerate. The chain is 2,3-bisphosphoglycerate-dependent phosphoglycerate mutase from Hydrogenobaculum sp. (strain Y04AAS1).